Here is a 196-residue protein sequence, read N- to C-terminus: uncharacterized protein (196 aa).

Over residues M1–P10 the composition is skewed to pro residues. Disordered stretches follow at residues M1 to G118 and T176 to G196. The span at P25–S45 shows a compositional bias: low complexity. The segment covering L54–N69 has biased composition (polar residues).

This is an uncharacterized protein from Homo sapiens (Human).